The following is a 387-amino-acid chain: Methyltransferase phomM' (387 aa).

Residues 98-223 (PHRPKDLHIL…QSVADLFTTL (126 aa)) are methyltransferase domain.

This sequence belongs to the class I-like SAM-binding methyltransferase superfamily. Erg6/SMT family.

Its pathway is mycotoxin biosynthesis. Its function is as follows. Methyltransferase; part of the gene cluster that mediates the biosynthesis of the phomopsins, a group of hexapeptide mycotoxins which infects lupins and causes lupinosis disease in livestock. Within the pathway, phomM' acts as an S-adenosylmethionine-dependent alpha-N-methyltransferase that catalyzes two successive N-methylation reactions, converting N-desmethyl-phomopsin A to phomopsin A and phomopsin A further to an N,N-dimethylated congener called phomopsin E. The pathway starts with the processing of the precursor phomA' by several endopeptidases including kexin proteases as well as the cluster-specific S41 family peptidase phomP1 and the oligopeptidase phomG' to produce 10 identical copies of the hexapeptide Tyr-Val-Ile-Pro-Ile-Asp. After being excised from the precursor peptide, the core peptides are cyclized and modified post-translationally by enzymes encoded within the gene cluster. The timing and order of proteolysis of the phomA' precursor and PTMs are still unknown. Two tyrosinase-like enzymes, phomQ1' and phomQ2, catalyze the chlorination and hydroxylation of Tyr, respectively. PhomYb, is proposed to be involved in the construction of the macrocyclic structure. The other 4 ustYa family proteins may be involved in PTMs that generate the unique structure of phomopsin A. PhomYa' is required for the hydroxylation of C-beta of Tyr. PhomYc', phomYd', and phomYe are responsible for the biosynthesis of 2,3-dehydroisoleucine (dIle), 2,3-dehydroaspartic acid (dAsp), and 3,4-dehydroproline (dPro), respectively. While dIle formation by phomYc' is indispensable for the installation of dAsp by phomYd', the order of the other PTMs have not been elucidated yet. Most of the biosynthetic enzymes likely have broad substrate specificity, and thus, there might be a metabolic grid from a precursor to phomopsin A. The enzyme(s) responsible for the biosynthesis of 3,4-dehydrovaline (dVal) have also not been identified yet. Finally, phomM' acts as an S-adenosylmethionine-dependent alpha-N-methyltransferase that catalyzes two successive N-methylation reactions, converting N-desmethyl-phomopsin A to phomopsin A and phomopsin A further to an N,N-dimethylated congener called phomopsin E. This Diaporthe leptostromiformis (Lupinosis disease fungus) protein is Methyltransferase phomM'.